Consider the following 481-residue polypeptide: Molybdate-anion transporter (481 aa).

12 consecutive transmembrane segments (helical) span residues 1–21 (MFVTAYLAFIVLAGLCVALEI), 47–67 (LFLKAYLLALWADWLQGPYLY), 80–100 (IAILYVCGLASCVLFAPVAGW), 131–151 (FMLILGRVLGGLSTSLLTTTF), 180–200 (WNYGLAVGAGLVANLFAEWLG), 201–221 (LGPVAPFLLAIPSLAACAWFV), 276–296 (VMLLGGVQALFESVLYIFVFL), 306–326 (PPLGIVFSSLMAATMAGSTLF), 341–361 (LLCLAILLAFFSFFMLTFSTV), 371–391 (LLAFLLLELACGLYFPAVSFL), 403–423 (AVLAWFRLPLHLLACLGLLAL), and 443–463 (FAGCAGMMLAALLAVISLFTV).

The protein belongs to the major facilitator superfamily.

It localises to the cell membrane. Its function is as follows. Mediates high-affinity intracellular uptake of the rare oligo-element molybdenum. This Danio rerio (Zebrafish) protein is Molybdate-anion transporter (mfsd5).